Here is a 236-residue protein sequence, read N- to C-terminus: Purine nucleoside phosphorylase DeoD-type (236 aa).

Histidine 4 contributes to the a purine D-ribonucleoside binding site. Phosphate-binding positions include glycine 20, arginine 24, arginine 43, and 87 to 90; that span reads RVGT. Residues 179 to 181 and 203 to 204 each bind a purine D-ribonucleoside; these read EME and SD. Aspartate 204 acts as the Proton donor in catalysis.

Belongs to the PNP/UDP phosphorylase family. As to quaternary structure, homohexamer; trimer of homodimers.

The catalysed reaction is a purine D-ribonucleoside + phosphate = a purine nucleobase + alpha-D-ribose 1-phosphate. It catalyses the reaction a purine 2'-deoxy-D-ribonucleoside + phosphate = a purine nucleobase + 2-deoxy-alpha-D-ribose 1-phosphate. Functionally, catalyzes the reversible phosphorolytic breakdown of the N-glycosidic bond in the beta-(deoxy)ribonucleoside molecules, with the formation of the corresponding free purine bases and pentose-1-phosphate. This Streptococcus thermophilus (strain ATCC BAA-491 / LMD-9) protein is Purine nucleoside phosphorylase DeoD-type.